The sequence spans 871 residues: Espin (871 aa).

ANK repeat units lie at residues 1–31 (MALE…GPSL), 35–66 (LDAL…AVSR), 69–99 (NGAT…RVQE), 103–132 (SGAT…ANSA), 137–167 (TGAL…GVNA), 171–201 (NGAT…DPHL), 205–235 (DGMT…SFSE), 239–268 (DGAT…EISQ), and 271–300 (WGGT…GLDV). Residues Ser-338 and Ser-342 each carry the phosphoserine modification. 4 disordered regions span residues 349–400 (QLDS…RGIP), 416–469 (PEKS…VGLH), 493–750 (KVEL…APGV), and 819–850 (EREQ…TLGY). The span at 352–365 (SGMSSPNTTMSVQP) shows a compositional bias: polar residues. Positions 377–395 (FSNYDSCSSSHSSSKGQRS) are enriched in low complexity. Positions 428–465 (PSPPPPPPPPPPSFPPPPPPTGTQPPPPPPGYPAPNPP) are enriched in pro residues. 3 positions are modified to phosphoserine: Ser-517, Ser-524, and Ser-556. The segment covering 522–548 (QDSELLHRQELLRHSTGLRRQDSDRKQ) has biased composition (basic and acidic residues). Positions 606–629 (LPPPPPPPPLPEALSSPPPAPPLP) are enriched in pro residues. Polar residues-rich tracts occupy residues 659 to 670 (KSFNMMSPTGDN) and 685 to 707 (PTPQ…SQPE). The residue at position 665 (Ser-665) is a Phosphoserine. Residues 669-686 (DNSELLAEIKAGKSLKPT) enclose the WH2 domain. 3 positions are modified to phosphoserine: Ser-704, Ser-708, and Ser-714. A coiled-coil region spans residues 772 to 848 (KRQVMVRKLQ…KEQSEKLRTL (77 aa)).

As to quaternary structure, monomer. Binds F-actin in a Ca(2+)-resistant fashion. Interacts (via N-terminus) with BAIAP2 (via SH3-domain). Interacts with PFN2. Interacts with MYO3A (via C-terminus). Interacts with MYO3B (via C-terminus). Expressed at high concentration in the microvillar parallel actin bundle (PAB) of hair cells stereocilia in the cochlea and vestibular system. Detected also at high levels of a number of other sensory cell types, including taste receptor cells, solitary chemoreceptor cells, vomeronasal sensory neurons and Merkel cells. Isoforms 2, 3, 4 and 5 are expressed in Purkinje cells dendritic spines. Expressed in utricle hair bundles (at protein level).

The protein resides in the cytoplasm. Its subcellular location is the cytoskeleton. It localises to the cell projection. The protein localises to the stereocilium. It is found in the microvillus. The protein resides in the cell junction. Its subcellular location is the dendritic spine. Multifunctional actin-bundling protein. Plays a major role in regulating the organization, dimension, dynamics and signaling capacities of the actin filament-rich microvilli in the mechanosensory and chemosensory cells. Required for the assembly and stabilization of the stereociliary parallel actin bundles. Plays a crucial role in the formation and maintenance of inner ear hair cell stereocilia. Involved in the elongation of actin in stereocilia. In extrastriolar hair cells, required for targeting MYO3B to stereocilia tips, and for regulation of stereocilia diameter and staircase formation. The polypeptide is Espin (Espn) (Mus musculus (Mouse)).